The chain runs to 313 residues: MKKKLLAGAITLLSVATLAACSKGSEGADLISMKGDIITEHQFYEQVKNNPSAQQVLLNMTIQKVFEKQYGSELDDKEVDDTIAEEKKQYGENYQRVLSQAGMTLETRKAQIRTSKLVELAVKKVAEAELTDEAYKKAFDEYTPDVTAQIIRLNNEDKAKEVLEKAKAEGADFAQLAKDNSTDEKTKENGGEITFDSASTEVPEQVKKAAFALDVDGVSDVITATGTQAYSSQYYIVKLTKKTEKSSNIDDYKEKLKTVILTQKQNDSTFVQSIIGKELQAANIKVKDQAFQNIFTQYIGGGDSSSSSSTSNE.

Positions 1–20 are cleaved as a signal peptide; sequence MKKKLLAGAITLLSVATLAA. A lipid anchor (N-palmitoyl cysteine) is attached at cysteine 21. Residue cysteine 21 is the site of S-diacylglycerol cysteine attachment. Residues 143–241 form the PpiC domain; that stretch reads TPDVTAQIIR…SQYYIVKLTK (99 aa).

The protein belongs to the PrsA family.

Its subcellular location is the cell membrane. The catalysed reaction is [protein]-peptidylproline (omega=180) = [protein]-peptidylproline (omega=0). Its function is as follows. Plays a major role in protein secretion by helping the post-translocational extracellular folding of several secreted proteins. This chain is Foldase protein PrsA, found in Streptococcus pneumoniae (strain P1031).